The primary structure comprises 597 residues: MERPAPLAVLPFSDPAHALSLLRGLSQLRAERKFLDVTLEAAGGRDFPAHRAVLAAASPYFRAMFAGQLRESRAERVRLHGVPPDMLQLLLDFSYTGRVAVSGDNAEPLLRAADLLQFPAVKEACGAFLQQQLDLANCLDMQDFAEAFSCSGLASAAQRFILRHVGELGAEQLERLPLARLLRYLRDDGLCVPKEEAAYQLALRWVRADPPRRAPHWPQLLEAVRLPFVRRFYLLAHVEAEPLVARCPPCLRLLREARDFQAARYDRHDRGPCPRMRPRPSTGLAEILVLVGGCDQDCDELVTVDCYNPQTGQWRYLAEFPDHLGGGYSIVALGNDIYVTGGSDGSRLYDCVWRYNSSVNEWTEVAPMLKAREYHSSSVLDGLLYVVAADSTERYDHATDSWEALQPMTYPMDNCSTTACRGRLYAIGSLAGKETMVIQCYDPDTDLWSLVNCGQLPPWSFAPKTVTLNGLMYFVRDDSAEVDVYNPTKDEWDKIPSMNQVHVGGSLAVLGGKLYVSGGYDNTFELSDVVEAYDPETRAWSVVGRLPEPTFWHGSVSIFRQFMPQTPAGGRGFELNSGSNDVDAGYHRLPQNPEELH.

One can recognise a BTB domain in the interval 35–103 (LDVTLEAAGG…SYTGRVAVSG (69 aa)). A BACK domain is found at 138 to 239 (CLDMQDFAEA…RRFYLLAHVE (102 aa)). Kelch repeat units lie at residues 287 to 335 (ILVL…ALGN), 336 to 382 (DIYV…VLDG), 384 to 422 (LYVV…ACRG), 423 to 470 (RLYA…TLNG), 472 to 512 (MYFV…VLGG), and 513 to 560 (KLYV…SIFR). The interval 570–597 (GRGFELNSGSNDVDAGYHRLPQNPEELH) is disordered.

In terms of assembly, component of the BCR(KLHL21) E3 ubiquitin ligase complex, at least composed of CUL3, KLHL21 and RBX1.

It is found in the cytoplasm. It localises to the cytoskeleton. Its subcellular location is the spindle. Its pathway is protein modification; protein ubiquitination. In terms of biological role, substrate-specific adapter of a BCR (BTB-CUL3-RBX1) E3 ubiquitin-protein ligase complex required for efficient chromosome alignment and cytokinesis. The BCR(KLHL21) E3 ubiquitin ligase complex regulates localization of the chromosomal passenger complex (CPC) from chromosomes to the spindle midzone in anaphase and mediates the ubiquitination of AURKB. Ubiquitination of AURKB by BCR(KLHL21) E3 ubiquitin ligase complex may not lead to its degradation by the proteasome. The polypeptide is Kelch-like protein 21 (Klhl21) (Mus musculus (Mouse)).